Here is a 178-residue protein sequence, read N- to C-terminus: Endoribonuclease YbeY (178 aa).

Zn(2+)-binding residues include His-118, His-122, and His-128. Residues 158–178 are disordered; the sequence is ADRQSEKDRRLLDKSRYFDEP.

This sequence belongs to the endoribonuclease YbeY family. Requires Zn(2+) as cofactor.

Its subcellular location is the cytoplasm. In terms of biological role, single strand-specific metallo-endoribonuclease involved in late-stage 70S ribosome quality control and in maturation of the 3' terminus of the 16S rRNA. This Mycolicibacterium smegmatis (strain ATCC 700084 / mc(2)155) (Mycobacterium smegmatis) protein is Endoribonuclease YbeY.